The primary structure comprises 265 residues: Cell division protein FtsQ (265 aa).

Low complexity predominate over residues M1 to R13. The interval M1–K25 is disordered. At M1–R35 the chain is on the cytoplasmic side. The span at T14 to A23 shows a compositional bias: pro residues. The chain crosses the membrane as a helical span at residues R36–G58. The Extracellular portion of the chain corresponds to S59–S265. In terms of domain architecture, POTRA spans L62–R131.

This sequence belongs to the FtsQ/DivIB family. FtsQ subfamily.

Its subcellular location is the cell membrane. Essential cell division protein. The polypeptide is Cell division protein FtsQ (Streptomyces bingchenggensis (strain BCW-1)).